The chain runs to 1439 residues: Probable histone acetyltransferase HAC-like 2 (1439 aa).

Disordered regions lie at residues 1–43 and 313–335; these read MKQG…ASAD and YGIS…TPTP. Residues 325 to 335 show a composition bias toward polar residues; sequence VNPSTRSTPTP. The segment at 607–687 adopts a TAZ-type zinc-finger fold; sequence ENTKQYHAQA…NEHCHVCCKA (81 aa). The PHD-type; degenerate zinc finger occupies 827–933; the sequence is KIHCHVQQET…EYTCFKCYIE (107 aa). Positions 948–1383 constitute a CBP/p300-type HAT domain; that stretch reads VRGAKDLPRT…MLYHLHNPTG (436 aa). Residues 964-989 are a coiled coil; that stretch reads EERLFKRLREERQERANKLKTSLDEV. Acetyl-CoA is bound by residues 1071 to 1073, 1090 to 1091, and Trp1146; these read LDS and RT. Residues 1265–1328 form a ZZ-type zinc finger; sequence HLQYSCSHCC…ILHPVEIVGV (64 aa). Zn(2+) is bound by residues Cys1270, Cys1273, Cys1285, Cys1288, Cys1294, Cys1297, His1310, and His1318.

It is found in the nucleus. It catalyses the reaction L-lysyl-[protein] + acetyl-CoA = N(6)-acetyl-L-lysyl-[protein] + CoA + H(+). Its function is as follows. Acetyltransferase enzyme. Acetylates histones, giving a specific tag for transcriptional activation. This Oryza sativa subsp. japonica (Rice) protein is Probable histone acetyltransferase HAC-like 2.